Consider the following 354-residue polypeptide: tRNA N6-adenosine threonylcarbamoyltransferase (354 aa).

Fe cation is bound by residues histidine 111 and histidine 115. Substrate contacts are provided by residues leucine 134–glycine 138, aspartate 167, glycine 180, and asparagine 279. A Fe cation-binding site is contributed by aspartate 319.

The protein belongs to the KAE1 / TsaD family. The cofactor is Fe(2+).

The protein localises to the cytoplasm. The catalysed reaction is L-threonylcarbamoyladenylate + adenosine(37) in tRNA = N(6)-L-threonylcarbamoyladenosine(37) in tRNA + AMP + H(+). Its function is as follows. Required for the formation of a threonylcarbamoyl group on adenosine at position 37 (t(6)A37) in tRNAs that read codons beginning with adenine. Is involved in the transfer of the threonylcarbamoyl moiety of threonylcarbamoyl-AMP (TC-AMP) to the N6 group of A37, together with TsaE and TsaB. TsaD likely plays a direct catalytic role in this reaction. This Neisseria meningitidis serogroup B (strain ATCC BAA-335 / MC58) protein is tRNA N6-adenosine threonylcarbamoyltransferase.